Here is a 120-residue protein sequence, read N- to C-terminus: Glycine cleavage system H protein (120 aa).

Residues 17-99 (VATVGITEHA…QGAAWFFKLK (83 aa)) form the Lipoyl-binding domain. Lysine 58 is subject to N6-lipoyllysine.

This sequence belongs to the GcvH family. As to quaternary structure, the glycine cleavage system is composed of four proteins: P, T, L and H. It depends on (R)-lipoate as a cofactor.

In terms of biological role, the glycine cleavage system catalyzes the degradation of glycine. The H protein shuttles the methylamine group of glycine from the P protein to the T protein. The polypeptide is Glycine cleavage system H protein (Sinorhizobium medicae (strain WSM419) (Ensifer medicae)).